The sequence spans 268 residues: Ribosomal RNA small subunit methyltransferase A (268 aa).

S-adenosyl-L-methionine contacts are provided by asparagine 18, leucine 20, glycine 45, glutamate 66, aspartate 91, and asparagine 112.

Belongs to the class I-like SAM-binding methyltransferase superfamily. rRNA adenine N(6)-methyltransferase family. RsmA subfamily.

The protein localises to the cytoplasm. The catalysed reaction is adenosine(1518)/adenosine(1519) in 16S rRNA + 4 S-adenosyl-L-methionine = N(6)-dimethyladenosine(1518)/N(6)-dimethyladenosine(1519) in 16S rRNA + 4 S-adenosyl-L-homocysteine + 4 H(+). Specifically dimethylates two adjacent adenosines (A1518 and A1519) in the loop of a conserved hairpin near the 3'-end of 16S rRNA in the 30S particle. May play a critical role in biogenesis of 30S subunits. In Shewanella frigidimarina (strain NCIMB 400), this protein is Ribosomal RNA small subunit methyltransferase A.